The primary structure comprises 524 residues: 2-isopropylmalate synthase (524 aa).

The Pyruvate carboxyltransferase domain maps to 12–274 (VIIFDTTLRD…WNRIETTMLT (263 aa)). D21, H209, H211, and N245 together coordinate Mn(2+). A regulatory domain region spans residues 398–524 (KLMSLTVIAG…EDAPAVAVAG (127 aa)).

This sequence belongs to the alpha-IPM synthase/homocitrate synthase family. LeuA type 1 subfamily. In terms of assembly, homodimer. The cofactor is Mn(2+).

The protein localises to the cytoplasm. It carries out the reaction 3-methyl-2-oxobutanoate + acetyl-CoA + H2O = (2S)-2-isopropylmalate + CoA + H(+). It functions in the pathway amino-acid biosynthesis; L-leucine biosynthesis; L-leucine from 3-methyl-2-oxobutanoate: step 1/4. Its function is as follows. Catalyzes the condensation of the acetyl group of acetyl-CoA with 3-methyl-2-oxobutanoate (2-ketoisovalerate) to form 3-carboxy-3-hydroxy-4-methylpentanoate (2-isopropylmalate). The chain is 2-isopropylmalate synthase from Rhodopseudomonas palustris (strain ATCC BAA-98 / CGA009).